The following is a 353-amino-acid chain: Phosphate acyltransferase (353 aa).

It belongs to the PlsX family. In terms of assembly, homodimer. Probably interacts with PlsY.

It localises to the cytoplasm. It carries out the reaction a fatty acyl-[ACP] + phosphate = an acyl phosphate + holo-[ACP]. Its pathway is lipid metabolism; phospholipid metabolism. Catalyzes the reversible formation of acyl-phosphate (acyl-PO(4)) from acyl-[acyl-carrier-protein] (acyl-ACP). This enzyme utilizes acyl-ACP as fatty acyl donor, but not acyl-CoA. In Rhodopseudomonas palustris (strain HaA2), this protein is Phosphate acyltransferase.